The primary structure comprises 145 residues: Venom protein 30.1 (145 aa).

Positions 1-18 are cleaved as a signal peptide; that stretch reads MIIVKLFTCLLMVSSVLT.

In terms of processing, contains 5 disulfide bonds. Expressed by the venom gland.

The protein resides in the secreted. The sequence is that of Venom protein 30.1 from Lychas mucronatus (Chinese swimming scorpion).